Reading from the N-terminus, the 272-residue chain is NADH-cytochrome b5 reductase 3 (272 aa).

Residues 11–123 enclose the FAD-binding FR-type domain; sequence DIKYPLRLID…RGPNGLLVYQ (113 aa). Residue lysine 13 is modified to N6-acetyllysine. A Phosphotyrosine modification is found at tyrosine 14. The residue at position 21 (lysine 21) is an N6-acetyllysine. The FAD site is built by arginine 63, proline 64, tyrosine 65, valine 80, lysine 82, and tyrosine 84. Position 91 is an N6-acetyllysine (lysine 91). Residues lysine 97, methionine 98, serine 99, and threonine 156 each contribute to the FAD site.

The protein belongs to the flavoprotein pyridine nucleotide cytochrome reductase family. Component of a complex composed of cytochrome b5, NADH-cytochrome b5 reductase (CYB5R3) and MTARC2. Interacts with MTLN; the interaction is required to maintain cellular lipid composition and leads to stimulation of mitochondrial respiratory complex I activity. FAD serves as cofactor.

It localises to the endoplasmic reticulum membrane. It is found in the mitochondrion outer membrane. The catalysed reaction is 2 Fe(III)-[cytochrome b5] + NADH = 2 Fe(II)-[cytochrome b5] + NAD(+) + H(+). In terms of biological role, catalyzes the reduction of two molecules of cytochrome b5 using NADH as the electron donor. The sequence is that of NADH-cytochrome b5 reductase 3 (CYB5R3) from Sus scrofa (Pig).